We begin with the raw amino-acid sequence, 500 residues long: ATP synthase subunit alpha (500 aa).

Gly-169–Thr-176 contributes to the ATP binding site.

The protein belongs to the ATPase alpha/beta chains family. In terms of assembly, F-type ATPases have 2 components, CF(1) - the catalytic core - and CF(0) - the membrane proton channel. CF(1) has five subunits: alpha(3), beta(3), gamma(1), delta(1), epsilon(1). CF(0) has three main subunits: a(1), b(2) and c(9-12). The alpha and beta chains form an alternating ring which encloses part of the gamma chain. CF(1) is attached to CF(0) by a central stalk formed by the gamma and epsilon chains, while a peripheral stalk is formed by the delta and b chains.

Its subcellular location is the cell membrane. The catalysed reaction is ATP + H2O + 4 H(+)(in) = ADP + phosphate + 5 H(+)(out). Produces ATP from ADP in the presence of a proton gradient across the membrane. The alpha chain is a regulatory subunit. The protein is ATP synthase subunit alpha of Clostridioides difficile (strain 630) (Peptoclostridium difficile).